The sequence spans 347 residues: NADH-ubiquinone oxidoreductase chain 2 (347 aa).

Transmembrane regions (helical) follow at residues 3–23 (PPILIIIMSTVMSGTMIVLTS), 25–45 (HWLLTWIGFEMNMLAIIPILM), 60–80 (FLTQATASMLLMMGIIINLMF), 96–116 (GLVTIALTMKLGMAPFHFWVP), 122–142 (ISLSSGMILLTWQKIAPLSVL), 153–173 (LLITMAIASVLIGGWGGLNQT), 178–198 (ILAYSSIAHMGWMTVILTYNP), 200–220 (LMVLNLTIYITMTLSTFMLFM), 237–257 (LPLMTSLILMLMMSLGGLPPL), 274–294 (DMIILPTFMAITALLNLYFYM), and 323–343 (IILLPPLIIISTMLLPMTPMM).

Belongs to the complex I subunit 2 family. As to quaternary structure, core subunit of respiratory chain NADH dehydrogenase (Complex I) which is composed of 45 different subunits. Interacts with TMEM242.

The protein resides in the mitochondrion inner membrane. The enzyme catalyses a ubiquinone + NADH + 5 H(+)(in) = a ubiquinol + NAD(+) + 4 H(+)(out). Functionally, core subunit of the mitochondrial membrane respiratory chain NADH dehydrogenase (Complex I) which catalyzes electron transfer from NADH through the respiratory chain, using ubiquinone as an electron acceptor. Essential for the catalytic activity and assembly of complex I. In Phoca vitulina (Harbor seal), this protein is NADH-ubiquinone oxidoreductase chain 2.